A 335-amino-acid chain; its full sequence is Terpene synthase 4 (335 aa).

A DDxx(x)D/E motif motif is present at residues 103-108 (DDYIFE). Positions 243 to 251 (NDLYSFNRE) match the NDxxSxxxD/E motif motif.

This sequence belongs to the terpene synthase family.

It catalyses the reaction (2E,6E)-farnesyl diphosphate + H2O = (6E)-nerolidol + diphosphate. Terpene synthase that converts its substrate farnesyl diphosphate (FPP) into the sesquiterpene (E)-nerolidol. This is Terpene synthase 4 from Dictyostelium discoideum (Social amoeba).